We begin with the raw amino-acid sequence, 75 residues long: uncharacterized protein (75 aa).

4Fe-4S ferredoxin-type domains are found at residues 2–30 (SHTI…KGEG) and 37–68 (DWYW…KEEP). Cys-10 and Cys-16 together coordinate [3Fe-4S] cluster. [4Fe-4S] cluster contacts are provided by Cys-20, Cys-46, Cys-49, and Cys-52. Cys-56 serves as a coordination point for [3Fe-4S] cluster.

The cofactor is [4Fe-4S] cluster. Requires [3Fe-4S] cluster as cofactor.

It is found in the plastid. Its subcellular location is the chloroplast. This is an uncharacterized protein from Porphyra purpurea (Red seaweed).